The chain runs to 211 residues: Arginine exporter protein ArgO (211 aa).

6 helical membrane-spanning segments follow: residues 1–21, 37–57, 68–88, 111–131, 147–167, and 179–199; these read MISY…PLGP, LMIA…GIFG, LLAL…FGAL, IIAT…DTFV, WFAL…ALLA, and AQRI…FQLA.

It belongs to the LysE/ArgO transporter (TC 2.A.75) family.

It localises to the cell inner membrane. The enzyme catalyses L-arginine(in) = L-arginine(out). Involved in the export of arginine. Important to control the intracellular level of arginine and the correct balance between arginine and lysine. This Salmonella paratyphi B (strain ATCC BAA-1250 / SPB7) protein is Arginine exporter protein ArgO.